The following is a 943-amino-acid chain: Isoleucine--tRNA ligase (943 aa).

The 'HIGH' region motif lies at 58–68; sequence PYANGKIHIGH. Position 567 (glutamate 567) interacts with L-isoleucyl-5'-AMP. The 'KMSKS' region motif lies at 608–612; sequence KMSKS. Lysine 611 contacts ATP. Cysteine 906, cysteine 909, cysteine 926, and cysteine 929 together coordinate Zn(2+).

The protein belongs to the class-I aminoacyl-tRNA synthetase family. IleS type 1 subfamily. In terms of assembly, monomer. It depends on Zn(2+) as a cofactor.

It localises to the cytoplasm. The catalysed reaction is tRNA(Ile) + L-isoleucine + ATP = L-isoleucyl-tRNA(Ile) + AMP + diphosphate. Catalyzes the attachment of isoleucine to tRNA(Ile). As IleRS can inadvertently accommodate and process structurally similar amino acids such as valine, to avoid such errors it has two additional distinct tRNA(Ile)-dependent editing activities. One activity is designated as 'pretransfer' editing and involves the hydrolysis of activated Val-AMP. The other activity is designated 'posttransfer' editing and involves deacylation of mischarged Val-tRNA(Ile). This Pseudomonas putida (strain GB-1) protein is Isoleucine--tRNA ligase.